Here is a 685-residue protein sequence, read N- to C-terminus: MLRRFSKKNKNPEGGSDDASRKQKKLLSKFLEFITSSIWSIPIASFIESQSVVFDRQQMETDVYIMIHKEYSQLIDTLIECFCEDVGTTPTELVAAIQLFNQKDVSQQYKVALEPLLAAQNFNVFVPMMMRKNIELQLQALQMIEFMCGLIPSVLQLEDGETLRNMKKLSPEETERYVLISVLRHSKDEYDSMQKGSEELEMMAQNSRIQREALEQEIRKEEILLQQALDEGARAQNQNQNQGTSSTQTDGVNAPLRSVAAMMAATFAIDTATSTDDVTYKFLDQSTGTMTSSTGVSVGTLTNTGVSSGTMTSGVDTGTDADGTVGRPKSAKRVGSAVGKRSVSKGTPSEDAKKSSGSSSPDEAEKSKRERPGTSVKKAIGIVAANSEMSSNGTQMDVPVDEEGTKKRPGTTSKKSIATVTASPEMSSKTTQMEPEQDGEGKKRPETSKGANERKYSNAGLEDIVGPKSSPHEEKKSSHPSSRKGSKATDENAPATRPPSRKAAGGSHEPRAKTPNQKNKDERPTTRRSSVDKNAPKRNDSVPRERKSSVSHDESKPPKPIGPLRGNKYDGDVVLGRAESPGIDHGPRRKNLNDVNSHLVDTNRLNSSDVRVRAQYLREQRDKLLQMKNAERIKQMTDIQQNASLERPKTAARAREILDKDKKEAVAIRKEISDKLKTQILTLHH.

Residues Met-1–Ser-20 are disordered. Residues Ser-197–Gln-242 are a coiled coil. Residues Thr-287–Thr-310 are compositionally biased toward low complexity. The interval Thr-287–Val-573 is disordered. Over residues Glu-363–Pro-372 the composition is skewed to basic and acidic residues. The span at Gly-410–Glu-434 shows a compositional bias: polar residues. 2 stretches are compositionally biased toward basic and acidic residues: residues Gly-439–Tyr-456 and His-508–Pro-557.

It belongs to the CFAP36 family. Expressed in amphid and phasmid ciliated neurons.

It is found in the cell projection. Its subcellular location is the cilium. The protein resides in the cytoplasm. The protein localises to the cytoskeleton. It localises to the cilium axoneme. The sequence is that of Cilia- and flagella-associated protein 36 from Caenorhabditis elegans.